Reading from the N-terminus, the 179-residue chain is MRFFVSGMPGVGKTTLAKRIADEIRREGYKVGGIITQEIRTGPKRSGFRVIALDTGEIGRLAYVGQGYPRVGRYVVDIEGFDRVAIPAISRALRDADIIIIDEIGPMEFKSNEFLKALGLVLKSEKPLLATVHRKLVDRYRPLGRYYWLTPENRNEVFAEILMEIRKVLGRNENAGNKA.

ATP is bound by residues 7–14 (GMPGVGKT) and 98–105 (IIIIDEIG).

The protein belongs to the THEP1 NTPase family.

It catalyses the reaction a ribonucleoside 5'-triphosphate + H2O = a ribonucleoside 5'-diphosphate + phosphate + H(+). Its function is as follows. Has nucleotide phosphatase activity towards ATP, GTP, CTP, TTP and UTP. May hydrolyze nucleoside diphosphates with lower efficiency. This is Nucleoside-triphosphatase THEP1 from Pyrococcus abyssi (strain GE5 / Orsay).